A 409-amino-acid polypeptide reads, in one-letter code: Tyrosine--tRNA ligase (409 aa).

L-tyrosine is bound at residue Tyr-39. The short motif at 44 to 53 (PTAPSLHVGS) is the 'HIGH' region element. L-tyrosine-binding residues include Tyr-176 and Gln-180. The 'KMSKS' region signature appears at 236 to 240 (KMGKT). Residue Lys-239 participates in ATP binding. One can recognise an S4 RNA-binding domain in the interval 346–409 (IGIVDALVGL…KKKHGILRKA (64 aa)).

It belongs to the class-I aminoacyl-tRNA synthetase family. TyrS type 1 subfamily. Homodimer.

It localises to the cytoplasm. The catalysed reaction is tRNA(Tyr) + L-tyrosine + ATP = L-tyrosyl-tRNA(Tyr) + AMP + diphosphate + H(+). Functionally, catalyzes the attachment of tyrosine to tRNA(Tyr) in a two-step reaction: tyrosine is first activated by ATP to form Tyr-AMP and then transferred to the acceptor end of tRNA(Tyr). The chain is Tyrosine--tRNA ligase from Novosphingobium aromaticivorans (strain ATCC 700278 / DSM 12444 / CCUG 56034 / CIP 105152 / NBRC 16084 / F199).